The primary structure comprises 434 residues: 3-phosphoshikimate 1-carboxyvinyltransferase (434 aa).

3-phosphoshikimate is bound by residues Lys15, Ser16, and Arg20. Lys15 is a phosphoenolpyruvate binding site. Residues Gly96 and Arg124 each coordinate phosphoenolpyruvate. The 3-phosphoshikimate site is built by Ser169, Gln171, Ser195, Asp319, and Lys346. Residue Gln171 participates in phosphoenolpyruvate binding. Catalysis depends on Asp319, which acts as the Proton acceptor. Residues Arg350 and Arg394 each contribute to the phosphoenolpyruvate site.

It belongs to the EPSP synthase family. Monomer.

It localises to the cytoplasm. It catalyses the reaction 3-phosphoshikimate + phosphoenolpyruvate = 5-O-(1-carboxyvinyl)-3-phosphoshikimate + phosphate. It functions in the pathway metabolic intermediate biosynthesis; chorismate biosynthesis; chorismate from D-erythrose 4-phosphate and phosphoenolpyruvate: step 6/7. Catalyzes the transfer of the enolpyruvyl moiety of phosphoenolpyruvate (PEP) to the 5-hydroxyl of shikimate-3-phosphate (S3P) to produce enolpyruvyl shikimate-3-phosphate and inorganic phosphate. In Chlorobaculum tepidum (strain ATCC 49652 / DSM 12025 / NBRC 103806 / TLS) (Chlorobium tepidum), this protein is 3-phosphoshikimate 1-carboxyvinyltransferase.